The primary structure comprises 350 residues: Histidinol-phosphate aminotransferase (350 aa).

Lysine 209 bears the N6-(pyridoxal phosphate)lysine mark.

This sequence belongs to the class-II pyridoxal-phosphate-dependent aminotransferase family. Histidinol-phosphate aminotransferase subfamily. As to quaternary structure, homodimer. Pyridoxal 5'-phosphate is required as a cofactor.

It carries out the reaction L-histidinol phosphate + 2-oxoglutarate = 3-(imidazol-4-yl)-2-oxopropyl phosphate + L-glutamate. It participates in amino-acid biosynthesis; L-histidine biosynthesis; L-histidine from 5-phospho-alpha-D-ribose 1-diphosphate: step 7/9. The chain is Histidinol-phosphate aminotransferase from Citrifermentans bemidjiense (strain ATCC BAA-1014 / DSM 16622 / JCM 12645 / Bem) (Geobacter bemidjiensis).